Here is a 544-residue protein sequence, read N- to C-terminus: Probable protein kinase UbiB (544 aa).

A helical membrane pass occupies residues 1 to 21; sequence MIFGELRRLYLIIGVMLSYGL. A Protein kinase domain is found at 123–500; sequence DFQQEPLASA…HVRQSQSRFL (378 aa). ATP-binding positions include 129 to 137 and K151; that span reads LASASIAQV. The active-site Proton acceptor is the D286. Helical transmembrane passes span 499–519 and 520–540; these read FLFGIGATLLLIGTFLMTQGA and DEGSLPAWLMAAGTVSWIIGW.

Belongs to the ABC1 family. UbiB subfamily.

Its subcellular location is the cell inner membrane. Its pathway is cofactor biosynthesis; ubiquinone biosynthesis [regulation]. Its function is as follows. Is probably a protein kinase regulator of UbiI activity which is involved in aerobic coenzyme Q (ubiquinone) biosynthesis. This chain is Probable protein kinase UbiB, found in Sodalis glossinidius (strain morsitans).